The sequence spans 172 residues: Bone marrow stromal antigen 2 (172 aa).

The Cytoplasmic segment spans residues 1–30; the sequence is MAPSFYHYLPVPMDEMGGKQGWGSHRQWLG. A helical; Signal-anchor for type II membrane protein membrane pass occupies residues 31–51; the sequence is AAILVVLFGVTLVILTIYFAV. The Extracellular portion of the chain corresponds to 52–152; that stretch reads TANSVACRDG…ETSSTVQVNS (101 aa). N-linked (GlcNAc...) asparagine glycosylation is present at N70. Residues 74 to 147 adopt a coiled-coil conformation; sequence LLQRQLTRTQ…LRIQKETSST (74 aa). The N-linked (GlcNAc...) asparagine; atypical glycan is linked to N94. A glycan (N-linked (GlcNAc...) asparagine) is linked at N97. A lipid anchor (GPI-anchor amidated serine) is attached at S152. The propeptide at 153–172 is removed in mature form; it reads GSSMVVSSLLVLKVSLFLLF.

Parallel homodimer; disulfide-linked. May form homotetramers under reducing conditions. Isoform 1 and isoform 2 form homodimers and also heterodimers with each other. Dimerization is essential for its antiviral activity. Interacts (via cytoplasmic domain) with ARHGAP44. Interacts with MMP14 (via C-terminal cytoplasmic tail). Interacts with LILRA4/ILT7. Interacts with RNF115. In naive mice, specifically expressed on type I interferon-producing cells (at protein level).

The protein resides in the golgi apparatus. It localises to the trans-Golgi network. It is found in the cell membrane. The protein localises to the late endosome. Its subcellular location is the membrane raft. The protein resides in the cytoplasm. It localises to the apical cell membrane. IFN-induced antiviral host restriction factor which efficiently blocks the release of diverse mammalian enveloped viruses by directly tethering nascent virions to the membranes of infected cells. Acts as a direct physical tether, holding virions to the cell membrane and linking virions to each other. The tethered virions can be internalized by endocytosis and subsequently degraded or they can remain on the cell surface. In either case, their spread as cell-free virions is restricted. Its target viruses belong to diverse families, including retroviridae: human immunodeficiency virus type 1 (HIV-1), mouse mammary tumor virus (MMTV) and murine leukemia virus (MLV), filoviridae: ebola virus (EBOV), arenaviridae: lassa virus (LASV), and rhabdoviridae: vesicular stomatitis virus (VSV). Can inhibit cell surface proteolytic activity of MMP14 causing decreased activation of MMP15 which results in inhibition of cell growth and migration. Can stimulate signaling by LILRA4/ILT7 and consequently provide negative feedback to the production of IFN by plasmacytoid dendritic cells in response to viral infection. Plays a role in the organization of the subapical actin cytoskeleton in polarized epithelial cells. The sequence is that of Bone marrow stromal antigen 2 (Bst2) from Mus musculus (Mouse).